A 483-amino-acid chain; its full sequence is Phosphoglucosamine mutase (483 aa).

Ser-131 serves as the catalytic Phosphoserine intermediate. Mg(2+)-binding residues include Ser-131, Asp-272, Asp-274, and Asp-276. A Phosphoserine modification is found at Ser-131.

Belongs to the phosphohexose mutase family. It depends on Mg(2+) as a cofactor. Post-translationally, activated by phosphorylation.

It catalyses the reaction alpha-D-glucosamine 1-phosphate = D-glucosamine 6-phosphate. Its function is as follows. Catalyzes the conversion of glucosamine-6-phosphate to glucosamine-1-phosphate. In Magnetococcus marinus (strain ATCC BAA-1437 / JCM 17883 / MC-1), this protein is Phosphoglucosamine mutase.